A 256-amino-acid polypeptide reads, in one-letter code: uncharacterized protein (256 aa).

Residues 1 to 24 (MIKRVNKLVLGISFLFLIISIFAG) form the signal peptide. The N-palmitoyl cysteine moiety is linked to residue Cys-25. A lipid anchor (S-diacylglycerol cysteine) is attached at Cys-25.

It belongs to the staphylococcal tandem lipoprotein family.

The protein localises to the cell membrane. This is an uncharacterized protein from Staphylococcus aureus (strain Mu50 / ATCC 700699).